The primary structure comprises 906 residues: Protein translocase subunit SecA (906 aa).

ATP-binding positions include Gln86, 104-108 (GEGKT), and Asp499. The tract at residues 865-885 (VSRIDPKDRNPEDPTSWGRVS) is disordered. Zn(2+) is bound by residues Cys890, Cys892, Cys901, and His902.

This sequence belongs to the SecA family. In terms of assembly, monomer and homodimer. Part of the essential Sec protein translocation apparatus which comprises SecA, SecYEG and auxiliary proteins SecDF-YajC and YidC. It depends on Zn(2+) as a cofactor.

It is found in the cell inner membrane. The protein resides in the cytoplasm. It carries out the reaction ATP + H2O + cellular proteinSide 1 = ADP + phosphate + cellular proteinSide 2.. In terms of biological role, part of the Sec protein translocase complex. Interacts with the SecYEG preprotein conducting channel. Has a central role in coupling the hydrolysis of ATP to the transfer of proteins into and across the cell membrane, serving both as a receptor for the preprotein-SecB complex and as an ATP-driven molecular motor driving the stepwise translocation of polypeptide chains across the membrane. This Rickettsia canadensis (strain McKiel) protein is Protein translocase subunit SecA.